We begin with the raw amino-acid sequence, 147 residues long: Hemoglobin subunit beta (147 aa).

The residue at position 2 (Val2) is an N-acetylvaline. Positions 3–147 constitute a Globin domain; that stretch reads HLTPEEKSAV…VANALAHKYH (145 aa). Thr13 carries the post-translational modification Phosphothreonine. Ser45 is modified (phosphoserine). Position 60 is an N6-acetyllysine (Lys60). Position 64 (His64) interacts with heme b. Lys83 carries the N6-acetyllysine modification. His93 serves as a coordination point for heme b. An S-nitrosocysteine modification is found at Cys94. At Lys145 the chain carries N6-acetyllysine.

Belongs to the globin family. In terms of assembly, heterotetramer of two alpha chains and two beta chains. Red blood cells.

In terms of biological role, involved in oxygen transport from the lung to the various peripheral tissues. This chain is Hemoglobin subunit beta (HBB), found in Gorilla gorilla gorilla (Western lowland gorilla).